A 55-amino-acid chain; its full sequence is Trypsin inhibitor ClTI-1 (55 aa).

One can recognise a Kazal-like domain in the interval 1–55; it reads SIPPACDKYSRLPGCPRDYSPVCGTDGKTYPNECVLCLSNSEENKNVQIYKSGMC. 3 disulfides stabilise this stretch: Cys6-Cys37, Cys15-Cys34, and Cys23-Cys55.

It localises to the secreted. Its function is as follows. Inhibits trypsin and plasmin. The polypeptide is Trypsin inhibitor ClTI-1 (Gallus gallus (Chicken)).